The following is a 354-amino-acid chain: Uroporphyrinogen decarboxylase (354 aa).

Residues Arg27–Arg31, Asp77, Tyr154, Thr209, and His327 contribute to the substrate site.

The protein belongs to the uroporphyrinogen decarboxylase family. In terms of assembly, homodimer.

Its subcellular location is the cytoplasm. The enzyme catalyses uroporphyrinogen III + 4 H(+) = coproporphyrinogen III + 4 CO2. Its pathway is porphyrin-containing compound metabolism; protoporphyrin-IX biosynthesis; coproporphyrinogen-III from 5-aminolevulinate: step 4/4. In terms of biological role, catalyzes the decarboxylation of four acetate groups of uroporphyrinogen-III to yield coproporphyrinogen-III. The polypeptide is Uroporphyrinogen decarboxylase (Klebsiella pneumoniae subsp. pneumoniae (strain ATCC 700721 / MGH 78578)).